Consider the following 439-residue polypeptide: MKLWGGRFKKDLDKLMEDFNSSISFDIRLLKYDIMGSIAHAKGLYKAGVLTEEELNLIEKGLKEILEESELKEIPQDEDVHSYVERLLVEKIGDVGRKLHTGRSRNDQVATDERLYLRDEIDKIKEDLIKLIDTLKEMAETYKETIMPGYTHLQRAQPVTFGHYLLAYVEMFKRDLSRLDDMMKRVNVMPLGSGALAGTTFNIDRYYVASLLGFDDITLNSMDGVSDRDFVIEFLSFASITMMHLSRFCEELILWSTKEFDFIEMDDRFSTGSSMMPQKKNPDAAELIRGKTGRVYGDLITILTVMKGLPLAYNKDMQEDKEALFDGIDTLKMSLKVFTEMIKTIKVKTDNMEKAAKYGYMNATDFADYLVQKGIPFRTAHEIAGKVVLYAIERNLPIEELSLEELKKFSDVIEKDVYEAIDIKNILKKRKTIGSPRIF.

Belongs to the lyase 1 family. Argininosuccinate lyase subfamily.

It is found in the cytoplasm. It catalyses the reaction 2-(N(omega)-L-arginino)succinate = fumarate + L-arginine. It participates in amino-acid biosynthesis; L-arginine biosynthesis; L-arginine from L-ornithine and carbamoyl phosphate: step 3/3. This Caldanaerobacter subterraneus subsp. tengcongensis (strain DSM 15242 / JCM 11007 / NBRC 100824 / MB4) (Thermoanaerobacter tengcongensis) protein is Argininosuccinate lyase.